A 108-amino-acid polypeptide reads, in one-letter code: Protein YcgL (108 aa).

The region spanning 12-96 (MFCVIYRSSK…PPEDLLKQHL (85 aa)) is the YcgL domain.

This Shigella sonnei (strain Ss046) protein is Protein YcgL.